A 317-amino-acid polypeptide reads, in one-letter code: R2-like ligand binding oxidase (317 aa).

3 residues coordinate Mn(2+): glutamate 73, glutamate 106, and histidine 109. Positions 76–167 (VTQDLQPFMA…ANQVRASVTY (92 aa)) form a cross-link, 3-(O4'-tyrosyl)-valine (Val-Tyr). Residue glutamate 106 participates in Fe cation binding. Fe cation contacts are provided by glutamate 172, glutamate 207, and histidine 210.

The protein belongs to the ribonucleoside diphosphate reductase small chain family. R2-like ligand binding oxidase subfamily. In terms of assembly, homodimer. Requires Fe cation as cofactor. It depends on Mn(2+) as a cofactor.

Probable oxidase. This is R2-like ligand binding oxidase from Saccharopolyspora erythraea (strain ATCC 11635 / DSM 40517 / JCM 4748 / NBRC 13426 / NCIMB 8594 / NRRL 2338).